Consider the following 723-residue polypeptide: Catalase-peroxidase (723 aa).

Positions W96–Y224 form a cross-link, tryptophyl-tyrosyl-methioninium (Trp-Tyr) (with M-250). Residue H97 is the Proton acceptor of the active site. A cross-link (tryptophyl-tyrosyl-methioninium (Tyr-Met) (with W-96)) is located at residues Y224–M250. H265 is a heme b binding site.

Belongs to the peroxidase family. Peroxidase/catalase subfamily. In terms of assembly, homodimer or homotetramer. Heme b is required as a cofactor. Formation of the three residue Trp-Tyr-Met cross-link is important for the catalase, but not the peroxidase activity of the enzyme.

It carries out the reaction H2O2 + AH2 = A + 2 H2O. It catalyses the reaction 2 H2O2 = O2 + 2 H2O. Bifunctional enzyme with both catalase and broad-spectrum peroxidase activity. This Marinobacter nauticus (strain ATCC 700491 / DSM 11845 / VT8) (Marinobacter aquaeolei) protein is Catalase-peroxidase.